The following is a 73-amino-acid chain: Small ribosomal subunit protein bS18B (73 aa).

It belongs to the bacterial ribosomal protein bS18 family. As to quaternary structure, part of the 30S ribosomal subunit. Forms a tight heterodimer with protein bS6.

Binds as a heterodimer with protein bS6 to the central domain of the 16S rRNA, where it helps stabilize the platform of the 30S subunit. The protein is Small ribosomal subunit protein bS18B of Frankia alni (strain DSM 45986 / CECT 9034 / ACN14a).